The following is a 33-amino-acid chain: Fatty acid-binding protein, intestinal (33 aa).

This sequence belongs to the calycin superfamily. Fatty-acid binding protein (FABP) family. Intestine.

It is found in the cytoplasm. Functionally, FABPs are thought to play a role in the intracellular transport of long-chain fatty acids and their acyl-CoA esters. The chain is Fatty acid-binding protein, intestinal (fabp2) from Rhamdia sapo (South American catfish).